The following is a 225-amino-acid chain: Flagellar transcriptional regulator FlhC (225 aa).

Residues Cys149, Cys152, Cys169, and Cys172 each contribute to the Zn(2+) site.

It belongs to the FlhC family. As to quaternary structure, heterohexamer composed of two FlhC and four FlhD subunits. Each FlhC binds a FlhD dimer, forming a heterotrimer, and a hexamer assembles by dimerization of two heterotrimers. The cofactor is Zn(2+).

It is found in the cytoplasm. Functions in complex with FlhD as a master transcriptional regulator that regulates transcription of several flagellar and non-flagellar operons by binding to their promoter region. Activates expression of class 2 flagellar genes, including fliA, which is a flagellum-specific sigma factor that turns on the class 3 genes. Also regulates genes whose products function in a variety of physiological pathways. This Burkholderia lata (strain ATCC 17760 / DSM 23089 / LMG 22485 / NCIMB 9086 / R18194 / 383) protein is Flagellar transcriptional regulator FlhC.